The primary structure comprises 186 residues: ADP compounds hydrolase NudE (186 aa).

Residue glutamate 40 coordinates substrate. The 128-residue stretch at 45-172 (TNREAVMIVP…DFNEARNVSA (128 aa)) folds into the Nudix hydrolase domain. The Nudix box motif lies at 80-101 (GLIDPGESVYEAANRELKEEVG). The a divalent metal cation site is built by glutamate 95 and glutamate 99. Serine 118 contacts substrate.

This sequence belongs to the Nudix hydrolase family. In terms of assembly, homodimer. Mg(2+) serves as cofactor.

The enzyme catalyses ADP-D-ribose + H2O = D-ribose 5-phosphate + AMP + 2 H(+). In terms of biological role, active on adenosine(5')triphospho(5')adenosine (Ap3A), ADP-ribose, NADH, adenosine(5')diphospho(5')adenosine (Ap2A). This is ADP compounds hydrolase NudE (nudE) from Escherichia coli (strain K12).